A 498-amino-acid polypeptide reads, in one-letter code: MPSVQIRSSPSHSQPAMTVTDLKQRVIACLNRLSDRDTLALAAAELDSIALNLSPETFSLFINCLQSTDSSAKSPVRKHCVSLLSVLSRSHGDSLAPHLSKMVSTVLRRLRDPDSSVRAACVAASVDMTTNITGQPFSILFGPMIETVIHDCDPNAQISAAMCLAAAVDAADEPDVEQLQKALPKIGKLLKSEGFKAKAELLGAIGTVIGAVGGRNSEKAVLDWLLPNVSEFLSSDDWRARKAAAEAMARVAMVEEELAPLYKKTCLGILESRRFDKVKLVRETMNRTLGLWKQLEGDSTEVSESSSSSKSASSGLSATSGKRSNTLKGKDRNLNTPLSSKSNDVEPLDRGDTPKDVEQEAVVSKEKRNRSTLGAKRVLFPAKMHKVKENGSNKSQVVQSSDEESPKTDSGSSSSSQAKSNAEELSLIRHQITQIEKQQSSLLDLFQKFMESSHNGMQSLERRVRGLETSFSVISTDLLVSRSITQNGNHKRNACRQN.

HEAT repeat units follow at residues 56–93, 97–134, 136–173, 177–214, and 219–257; these read ETFS…SHGD, PHLS…NITG, PFSI…AADE, EQLQ…AVGG, and KAVL…VEEE. The tract at residues 296 to 423 is disordered; the sequence is EGDSTEVSES…SSSQAKSNAE (128 aa). Low complexity predominate over residues 300 to 322; the sequence is TEVSESSSSSKSASSGLSATSGK. The span at 343–366 shows a compositional bias: basic and acidic residues; that stretch reads NDVEPLDRGDTPKDVEQEAVVSKE. A compositionally biased stretch (polar residues) spans 390 to 400; sequence NGSNKSQVVQS. At Ser426 the chain carries Phosphoserine.

In Arabidopsis thaliana (Mouse-ear cress), this protein is TORTIFOLIA1-like protein 5.